The chain runs to 156 residues: Phosphopantetheine adenylyltransferase (156 aa).

A substrate-binding site is contributed by Thr-9. Residues 9–10 (TF) and His-17 each bind ATP. Positions 41, 73, and 87 each coordinate substrate. Residues 88 to 90 (GVR), Glu-98, and 123 to 129 (WAFVSST) contribute to the ATP site.

Belongs to the bacterial CoaD family. As to quaternary structure, homohexamer. Mg(2+) serves as cofactor.

The protein localises to the cytoplasm. The catalysed reaction is (R)-4'-phosphopantetheine + ATP + H(+) = 3'-dephospho-CoA + diphosphate. Its pathway is cofactor biosynthesis; coenzyme A biosynthesis; CoA from (R)-pantothenate: step 4/5. Functionally, reversibly transfers an adenylyl group from ATP to 4'-phosphopantetheine, yielding dephospho-CoA (dPCoA) and pyrophosphate. The polypeptide is Phosphopantetheine adenylyltransferase (Haemophilus influenzae (strain 86-028NP)).